Consider the following 199-residue polypeptide: Inducible T-cell costimulator (199 aa).

The first 20 residues, 1–20, serve as a signal peptide directing secretion; the sequence is MKSGLWYFFLFCLRIKVLTG. Over 21–140 the chain is Extracellular; sequence EINGSANYEM…YESQLCCQLK (120 aa). The region spanning 30-132 is the Ig-like V-type domain; that stretch reads MFIFHNGGVQ…LTGGYLHIYE (103 aa). 2 cysteine pairs are disulfide-bonded: C42-C109 and C63-C83. Residues N89 and N110 are each glycosylated (N-linked (GlcNAc...) asparagine). The helical transmembrane segment at 141-161 threads the bilayer; that stretch reads FWLPIGCAAFVVVCILGCILI. Residues 162 to 199 lie on the Cytoplasmic side of the membrane; sequence CWLTKKKYSSSVHDPNGEYMFMRAVNTAKKSRLTDVTL.

In terms of assembly, homodimer; disulfide-linked. Interacts with ICOSLG. Interacts with PIK3R1. Interacts with TBK1; this interaction is critical for the maturation of T follicular regulatory cells. Post-translationally, N-glycosylated. In terms of tissue distribution, activated T-cells. Highly expressed on tonsillar T-cells, which are closely associated with B-cells in the apical light zone of germinal centers, the site of terminal B-cell maturation. Expressed at lower levels in thymus, lung, lymph node and peripheral blood leukocytes. Expressed in the medulla of fetal and newborn thymus.

Its subcellular location is the cell membrane. The protein localises to the secreted. Functionally, stimulatory receptor expressed in activated or antigen-experienced T-cells that plays an important role in the immune response. Upon binding to its ligand ICOSL expressed on antigen presenting cells (APCs), delivers costimulatory signals that enhances all basic T-cell responses to a foreign antigen, namely proliferation, secretion of lymphokines including IL10, up-regulation of molecules that mediate cell-cell interaction, and effective help for antibody secretion by B-cells. Also acts as a costimulatory receptor critical for the differentiation of T follicular regulatory cells upon immune challenges such as viral infection. Mechanistically, potentiates TCR-induced calcium flux by augmenting PLCG1 activation and actin remodeling. In addition, activates PI3K signaling pathways independently of calcium flux. Essential both for efficient interaction between T and B-cells and for normal antibody responses to T-cell dependent antigens. Prevents the apoptosis of pre-activated T-cells. Plays a critical role in CD40-mediated class switching of immunoglobin isotypes. The polypeptide is Inducible T-cell costimulator (ICOS) (Homo sapiens (Human)).